The following is a 623-amino-acid chain: Membrane protein insertase YidC (623 aa).

A run of 5 helical transmembrane segments spans residues 8 to 28, 379 to 399, 449 to 469, 507 to 527, and 543 to 563; these read LILA…LFPP, MGLA…PLAY, LPIL…FVTI, TTMA…SMWL, and IFAW…SGLV. A compositionally biased stretch (low complexity) spans 601–617; the sequence is KPAAQPAGKAANDGAAP. A disordered region spans residues 601–623; sequence KPAAQPAGKAANDGAAPAKKRKP.

This sequence belongs to the OXA1/ALB3/YidC family. Type 1 subfamily. As to quaternary structure, interacts with the Sec translocase complex via SecD. Specifically interacts with transmembrane segments of nascent integral membrane proteins during membrane integration.

It is found in the cell inner membrane. In terms of biological role, required for the insertion and/or proper folding and/or complex formation of integral membrane proteins into the membrane. Involved in integration of membrane proteins that insert both dependently and independently of the Sec translocase complex, as well as at least some lipoproteins. Aids folding of multispanning membrane proteins. The polypeptide is Membrane protein insertase YidC (Cereibacter sphaeroides (strain ATCC 17023 / DSM 158 / JCM 6121 / CCUG 31486 / LMG 2827 / NBRC 12203 / NCIMB 8253 / ATH 2.4.1.) (Rhodobacter sphaeroides)).